Consider the following 116-residue polypeptide: Large ribosomal subunit protein uL18 (116 aa).

The protein belongs to the universal ribosomal protein uL18 family. As to quaternary structure, part of the 50S ribosomal subunit; part of the 5S rRNA/L5/L18/L25 subcomplex. Contacts the 5S and 23S rRNAs.

Its function is as follows. This is one of the proteins that bind and probably mediate the attachment of the 5S RNA into the large ribosomal subunit, where it forms part of the central protuberance. This Exiguobacterium sibiricum (strain DSM 17290 / CCUG 55495 / CIP 109462 / JCM 13490 / 255-15) protein is Large ribosomal subunit protein uL18.